The primary structure comprises 485 residues: Forkhead box protein N3 (485 aa).

Residues 1–21 are disordered; sequence MGPVMPPSKKPESPGISVSSG. Residues Ser-83, Ser-85, and Ser-97 each carry the phosphoserine modification. Positions 86–108 are disordered; that stretch reads PVQDLDDDTPPSPAHSDMPYDAR. A DNA-binding region (fork-head) is located at residues 114–210; that stretch reads KPPYSFSCLI…QALKKTPYHS (97 aa). The segment at 315-454 is disordered; sequence RTESEPSCGS…DEEMKEAAGS (140 aa). Over residues 338-359 the composition is skewed to low complexity; the sequence is SSAKSSHARSTSPASDCVSSSS. Basic and acidic residues predominate over residues 382-404; it reads HESHSETEEDDRKCSPKEAKDAL. The segment covering 412–424 has biased composition (basic residues); sequence QHKKRQHFAKARK. At Ser-443 the chain carries Phosphoserine.

In terms of assembly, interacts through its C-terminus with the C-terminus of SNW1/SKIP.

The protein resides in the nucleus. In terms of biological role, acts as a transcriptional repressor. May be involved in DNA damage-inducible cell cycle arrests (checkpoints). The sequence is that of Forkhead box protein N3 (FOXN3) from Sus scrofa (Pig).